The sequence spans 233 residues: Large ribosomal subunit protein uL1 (233 aa).

It belongs to the universal ribosomal protein uL1 family. Part of the 50S ribosomal subunit.

In terms of biological role, binds directly to 23S rRNA. The L1 stalk is quite mobile in the ribosome, and is involved in E site tRNA release. Its function is as follows. Protein L1 is also a translational repressor protein, it controls the translation of the L11 operon by binding to its mRNA. This is Large ribosomal subunit protein uL1 from Finegoldia magna (strain ATCC 29328 / DSM 20472 / WAL 2508) (Peptostreptococcus magnus).